A 358-amino-acid chain; its full sequence is Heat-inducible transcription repressor HrcA (358 aa).

It belongs to the HrcA family.

Its function is as follows. Negative regulator of class I heat shock genes (grpE-dnaK-dnaJ and groELS operons). Prevents heat-shock induction of these operons. In Caulobacter vibrioides (strain NA1000 / CB15N) (Caulobacter crescentus), this protein is Heat-inducible transcription repressor HrcA.